Here is a 361-residue protein sequence, read N- to C-terminus: Peptide chain release factor 1 (361 aa).

The residue at position 238 (glutamine 238) is an N5-methylglutamine.

It belongs to the prokaryotic/mitochondrial release factor family. Post-translationally, methylated by PrmC. Methylation increases the termination efficiency of RF1.

The protein localises to the cytoplasm. Peptide chain release factor 1 directs the termination of translation in response to the peptide chain termination codons UAG and UAA. The chain is Peptide chain release factor 1 from Mesomycoplasma hyopneumoniae (strain 232) (Mycoplasma hyopneumoniae).